The chain runs to 634 residues: Leucine--tRNA ligase subunit alpha (634 aa).

Positions 43 to 51 (PSGRIHMGH) match the 'HIGH' region motif.

Belongs to the class-I aminoacyl-tRNA synthetase family. As to quaternary structure, seems to consist of an alpha chain and a beta chain.

Its subcellular location is the cytoplasm. It carries out the reaction tRNA(Leu) + L-leucine + ATP = L-leucyl-tRNA(Leu) + AMP + diphosphate. The sequence is that of Leucine--tRNA ligase subunit alpha (leuS) from Aquifex aeolicus (strain VF5).